The primary structure comprises 130 residues: Small ribosomal subunit protein uS8 (130 aa).

The protein belongs to the universal ribosomal protein uS8 family. As to quaternary structure, part of the 30S ribosomal subunit.

One of the primary rRNA binding proteins, it binds directly to 16S rRNA central domain where it helps coordinate assembly of the platform of the 30S subunit. The sequence is that of Small ribosomal subunit protein uS8 from Methanococcus maripaludis (strain C6 / ATCC BAA-1332).